We begin with the raw amino-acid sequence, 411 residues long: MSISFDLTIDDTRDQLARHARASLEAKPSLIGMSREEMAAALIAAGVPERQVKMRISQLWHWLYVRGVSDFADMRNISKDLRAMLAQHFTIARPEVVEEQISQDGTRKWLFRFPPRGAGRPVEIESVYIPEEGRGTLCISSQVGCTLTCSFCHTGTQKLVRNLTSEEILAQLLTARDRLGDFPDKDTPDGAMVPAEGRKITNIVMMGMGEPLYNFEEVKKALLIASDGDGLSLSKCRITLSTSGVVPEIYRTGDEIGVMLAISLHAVRDELRDILVPINKKYPLAELIKACREYPGLSNAKRITFEYVMLKDINDSLDDAKLLVKLLQGIPAKINLIPFNPWPGTNYQCSDWEQIEKFADYVNAAGYASPIRTPRGRDILAACGQLKSESERLRKSERLALEAMMIAGHGE.

Residue Glu-125 is the Proton acceptor of the active site. One can recognise a Radical SAM core domain in the interval 131–380 (EEGRGTLCIS…IRTPRGRDIL (250 aa)). A disulfide bond links Cys-138 and Cys-383. Residues Cys-145, Cys-149, and Cys-152 each coordinate [4Fe-4S] cluster. Residues 209-210 (GE), Ser-241, 263-265 (SLH), and Asn-340 each bind S-adenosyl-L-methionine. Cys-383 (S-methylcysteine intermediate) is an active-site residue.

The protein belongs to the radical SAM superfamily. RlmN family. The cofactor is [4Fe-4S] cluster.

It is found in the cytoplasm. The enzyme catalyses adenosine(2503) in 23S rRNA + 2 reduced [2Fe-2S]-[ferredoxin] + 2 S-adenosyl-L-methionine = 2-methyladenosine(2503) in 23S rRNA + 5'-deoxyadenosine + L-methionine + 2 oxidized [2Fe-2S]-[ferredoxin] + S-adenosyl-L-homocysteine. The catalysed reaction is adenosine(37) in tRNA + 2 reduced [2Fe-2S]-[ferredoxin] + 2 S-adenosyl-L-methionine = 2-methyladenosine(37) in tRNA + 5'-deoxyadenosine + L-methionine + 2 oxidized [2Fe-2S]-[ferredoxin] + S-adenosyl-L-homocysteine. Its function is as follows. Specifically methylates position 2 of adenine 2503 in 23S rRNA and position 2 of adenine 37 in tRNAs. m2A2503 modification seems to play a crucial role in the proofreading step occurring at the peptidyl transferase center and thus would serve to optimize ribosomal fidelity. The polypeptide is Dual-specificity RNA methyltransferase RlmN (Brucella abortus (strain S19)).